A 105-amino-acid chain; its full sequence is PTS system lactose-specific EIIA component (105 aa).

A PTS EIIA type-3 domain is found at 4–102 (EEMTLLGFEI…IHHLIELYKR (99 aa)). Catalysis depends on His-78, which acts as the Tele-phosphohistidine intermediate. His-78 is modified (phosphohistidine; by HPr). Asp-81 lines the Mg(2+) pocket.

As to quaternary structure, homotrimer. It depends on Mg(2+) as a cofactor.

The protein localises to the cytoplasm. The phosphoenolpyruvate-dependent sugar phosphotransferase system (sugar PTS), a major carbohydrate active transport system, catalyzes the phosphorylation of incoming sugar substrates concomitantly with their translocation across the cell membrane. The enzyme II LacEF PTS system is involved in lactose transport. This Lactococcus lactis subsp. lactis (Streptococcus lactis) protein is PTS system lactose-specific EIIA component.